Consider the following 409-residue polypeptide: Shaggy-related protein kinase gamma (409 aa).

Ala2 bears the N-acetylalanine mark. The region spanning 73–357 is the Protein kinase domain; it reads YMAERVVGHG…ALDSLVHPFF (285 aa). ATP contacts are provided by residues 79–87 and Lys102; that span reads VGHGSFGVV. The Proton acceptor role is filled by Asp198. Residue Tyr233 is modified to Phosphotyrosine.

It belongs to the protein kinase superfamily. CMGC Ser/Thr protein kinase family. GSK-3 subfamily. In terms of assembly, binds to KIB1. Component of a complex made of POLAR, BASL, ASK7/BIN2 and ASK3/SK12. Binds to POLAR and BASL. In terms of processing, autophosphorylated mainly on threonine and serine residues. As to expression, roots, shoots and leaves.

It is found in the cytoplasm. It localises to the cell cortex. The enzyme catalyses L-seryl-[protein] + ATP = O-phospho-L-seryl-[protein] + ADP + H(+). It catalyses the reaction L-threonyl-[protein] + ATP = O-phospho-L-threonyl-[protein] + ADP + H(+). Its function is as follows. May mediate extracellular signals to regulate transcription in differentiating cells. Probably involved first at the cortical polarity site, to restrict MAPK signaling and promote asymmetric cell division (ACD), and second in the nucleus of stomatal lineage ground cells (SLGCs) or meristemoids, to limit cell division and to promote differentiation into pavement or stomatal guard cells, respectively. Phosphorylate YDA and SPCH in vitro. The polypeptide is Shaggy-related protein kinase gamma (Arabidopsis thaliana (Mouse-ear cress)).